The following is a 306-amino-acid chain: Pantothenate kinase (306 aa).

91–98 contacts ATP; sequence GSVAVGKS.

This sequence belongs to the prokaryotic pantothenate kinase family.

Its subcellular location is the cytoplasm. It catalyses the reaction (R)-pantothenate + ATP = (R)-4'-phosphopantothenate + ADP + H(+). The protein operates within cofactor biosynthesis; coenzyme A biosynthesis; CoA from (R)-pantothenate: step 1/5. The chain is Pantothenate kinase from Streptococcus suis (strain 98HAH33).